The chain runs to 349 residues: Septin-2 (349 aa).

The Septin-type G domain occupies Lys33–Arg305. The segment at Gly43–Ser50 is G1 motif. GTP contacts are provided by residues Gly43–Ser50, Thr77, Gly103, Lys182–Glu190, Gly240, and Arg255. Residues Asp100–Gly103 are G3 motif. A G4 motif region spans residues Ala181–Asp184. The interval Trp259–His269 is important for dimerization.

It belongs to the TRAFAC class TrmE-Era-EngA-EngB-Septin-like GTPase superfamily. Septin GTPase family. As to quaternary structure, septins polymerize into heterooligomeric protein complexes that form filaments, and associate with cellular membranes, actin filaments and microtubules. GTPase activity is required for filament formation. Can form heterooligomers with other family members and form filaments.

The protein localises to the cytoplasm. The protein resides in the cytoskeleton. It localises to the spindle. Its subcellular location is the cleavage furrow. It is found in the midbody. The protein localises to the cell cortex. The protein resides in the cell projection. It localises to the cilium membrane. Filament-forming cytoskeletal GTPase. Required for normal organization of the actin cytoskeleton. Plays a role in the biogenesis of polarized columnar-shaped epithelium by maintaining polyglutamylated microtubules, thus facilitating efficient vesicle transport, and by impeding MAP4 binding to tubulin. Required for the progression through mitosis. Forms a scaffold at the midplane of the mitotic splindle required to maintain CENPE localization at kinetochores and consequently chromosome congression. During anaphase, may be required for chromosome segregation and spindle elongation. Plays a role in ciliogenesis and collective cell movements. In cilia, required for the integrity of the diffusion barrier at the base of the primary cilium that prevents diffusion of transmembrane proteins between the cilia and plasma membranes. In Gallus gallus (Chicken), this protein is Septin-2.